The sequence spans 415 residues: Gamma-glutamyl phosphate reductase (415 aa).

This sequence belongs to the gamma-glutamyl phosphate reductase family.

It localises to the cytoplasm. The enzyme catalyses L-glutamate 5-semialdehyde + phosphate + NADP(+) = L-glutamyl 5-phosphate + NADPH + H(+). Its pathway is amino-acid biosynthesis; L-proline biosynthesis; L-glutamate 5-semialdehyde from L-glutamate: step 2/2. Catalyzes the NADPH-dependent reduction of L-glutamate 5-phosphate into L-glutamate 5-semialdehyde and phosphate. The product spontaneously undergoes cyclization to form 1-pyrroline-5-carboxylate. This chain is Gamma-glutamyl phosphate reductase, found in Oceanobacillus iheyensis (strain DSM 14371 / CIP 107618 / JCM 11309 / KCTC 3954 / HTE831).